A 716-amino-acid chain; its full sequence is Leucine-rich repeat neuronal protein 1 (716 aa).

The first 25 residues, 1-25 (MARMSFVLAAYQMVLSLLMTSLTGS), serve as a signal peptide directing secretion. One can recognise an LRRNT domain in the interval 26–72 (SLQSSECPQLCVCEIRPWFTPQSTYREATTVDCNDLRLTRIPSNLSS). Topologically, residues 26–631 (SLQSSECPQL…DISDQETSTA (606 aa)) are extracellular. N-linked (GlcNAc...) asparagine glycosylation is present at Asn69. LRR repeat units follow at residues 73-95 (DTQV…QQLF), 96-117 (NLTE…GLAN), 120-141 (QLTT…CLQD), 144-165 (NLQE…AFSG), 168-189 (NLLR…WFDS), 192-213 (NLEI…NFKP), 216-237 (NLRS…ALVG), 240-261 (SLES…ALQK), and 264-285 (NLKF…DFKN). N-linked (GlcNAc...) asparagine glycans are attached at residues Asn96, Asn106, and Asn117. Residues 371 to 424 (NPLRCDCVIHWINSNKTNIRFMEPLSMFCAMPPEYRGQQVKEVLIQDSSEQCLP) form the LRRCT domain. N-linked (GlcNAc...) asparagine glycosylation is present at Asn385. The region spanning 424-515 (PMISHDTFPN…GADTRVVMIK (92 aa)) is the Ig-like C2-type domain. A disulfide bridge links Cys447 with Cys499. Residues Asn517, Asn582, and Asn611 are each glycosylated (N-linked (GlcNAc...) asparagine). One can recognise a Fibronectin type-III domain in the interval 525-617 (QVLKIYVKQT…SCVNVTTKNA (93 aa)). A helical membrane pass occupies residues 632–652 (LAAVMGSMFAVISLASIAVYI). At 653–716 (AKRFKRKNYH…VDTSRSYYMW (64 aa)) the chain is on the cytoplasmic side. Residues 691-700 (DSEKDKDGTA) are compositionally biased toward basic and acidic residues. The interval 691-716 (DSEKDKDGTADTKPTQVDTSRSYYMW) is disordered. The span at 702 to 716 (TKPTQVDTSRSYYMW) shows a compositional bias: polar residues.

The protein resides in the membrane. The chain is Leucine-rich repeat neuronal protein 1 (LRRN1) from Bos taurus (Bovine).